We begin with the raw amino-acid sequence, 423 residues long: Tumor necrosis factor receptor superfamily member 19 (423 aa).

Residues Met1–Cys29 form the signal peptide. At Glu30–Leu170 the chain is on the extracellular side. TNFR-Cys repeat units lie at residues Asp33 to Cys72, Thr74 to Cys114, and Asp116 to Cys149. 8 disulfides stabilise this stretch: Cys34/Cys46, Cys49/Cys62, Cys52/Cys72, Cys75/Cys89, Cys92/Cys106, Cys95/Cys114, Cys117/Cys135, and Cys138/Cys149. The N-linked (GlcNAc...) asparagine glycan is linked to Asn105. A helical membrane pass occupies residues Ala171–Ile191. At Tyr192 to Leu423 the chain is on the cytoplasmic side.

Associates with TRAF1, TRAF2, TRAF3 and TRAF5. Interacts with LINGO1. Highly expressed in prostate. Detected at lower levels in thymus, spleen, testis, uterus, small intestine, colon and peripheral blood leukocytes.

It localises to the membrane. Can mediate activation of JNK and NF-kappa-B. May promote caspase-independent cell death. This Homo sapiens (Human) protein is Tumor necrosis factor receptor superfamily member 19 (TNFRSF19).